We begin with the raw amino-acid sequence, 513 residues long: Protein indeterminate-domain 11 (513 aa).

A disordered region spans residues 1–84 (MMNKDMLLHQ…QPGNPDPESE (84 aa)). Residues 10–45 (QHQQPQQDENMSNLTSASGDQASVSSGNITEASGSN) show a composition bias toward polar residues. The span at 51-60 (QQQQEQQQQQ) shows a compositional bias: low complexity. Phosphoserine is present on Ser89. 2 C2H2-type zinc fingers span residues 99 to 121 (FVCEICNKGFQRDQNLQLHRRGH) and 141 to 171 (YVCPEASCVHHDPSRALGDLTGIKKHFCRKH). The Nuclear localization signal motif lies at 163-170 (IKKHFCRK). Residues 176–199 (WKCDKCSKKYAVQSDCKAHSKTCG) form a C2H2-type 2; degenerate zinc finger. Positions 178, 181, 194, 198, 205, 207, 220, and 224 each coordinate Zn(2+). The segment at 203-226 (YRCDCGTLFSRRDSFITHRAFCEA) adopts a CCHC-type 2; atypical zinc-finger fold. Residues 213–225 (RRDSFITHRAFCE) are SHR-binding. Disordered stretches follow at residues 255–280 (ASHPHHHHQTQPTINVSSSSSSSHNH) and 334–358 (PQPHALTSSNPNPSNGGGGGGSLFS). The span at 264 to 280 (TQPTINVSSSSSSSHNH) shows a compositional bias: low complexity.

Its subcellular location is the nucleus. Its function is as follows. Probable transcription factor. The polypeptide is Protein indeterminate-domain 11 (Arabidopsis thaliana (Mouse-ear cress)).